Here is a 488-residue protein sequence, read N- to C-terminus: Erythromycin resistance ATP-binding protein MsrA (488 aa).

One can recognise an ABC transporter 1 domain in the interval 6–199 (IKFNQINHKL…NQYEQEQLEQ (194 aa)). Residue 38 to 45 (GGNGTGKT) coordinates ATP. The interval 200 to 298 (QRKYEQYISE…KIYDIHNNYP (99 aa)) is Q-linker, rich in Glu and hydrophilic AA. The segment at 211-255 (QRLSQASKAKRNQAQQMAQASSKQKNKSIAPDRLSASKEKGTVEK) is disordered. Residues 222–233 (NQAQQMAQASSK) are compositionally biased toward low complexity. Positions 245-255 (SASKEKGTVEK) are enriched in basic and acidic residues. The 189-residue stretch at 299 to 487 (IIAQNLTLVK…ELTGQSIHDI (189 aa)) folds into the ABC transporter 2 domain. 331–338 (GANGVGKT) serves as a coordination point for ATP.

Belongs to the ABC transporter superfamily.

Confers resistance to 14-membered ring macrolides (like erythromycin) and to B streptogramins, by acting as an ATP-dependent efflux pump. The polypeptide is Erythromycin resistance ATP-binding protein MsrA (msrA) (Staphylococcus epidermidis).